Consider the following 531-residue polypeptide: Dimethylnonatriene synthase (531 aa).

A helical transmembrane segment spans residues 6–26 (TMSVAMALAAAIFVVLCSVVA). Cys464 is a binding site for heme.

The protein belongs to the cytochrome P450 family. Requires heme as cofactor.

The protein localises to the membrane. It carries out the reaction (6E,10E)-geranyllinalool + reduced [NADPH--hemoprotein reductase] + O2 = (3E,7E)-4,8,12-trimethyltrideca 1,3,7,11-tetraene + but-3-en-2-one + oxidized [NADPH--hemoprotein reductase] + 2 H2O + H(+). The catalysed reaction is (3S,6E)-nerolidol + reduced [NADPH--hemoprotein reductase] + O2 = (3E)-4,8-dimethylnona-1,3,7-triene + but-3-en-2-one + oxidized [NADPH--hemoprotein reductase] + 2 H2O + H(+). It participates in secondary metabolite biosynthesis; terpenoid biosynthesis. In terms of biological role, involved in the biosynthesis of homoterpenes, attractants of herbivores parasitoids and predators (e.g. predatory mites and parasitoid wasps). Component of the volatile terpenes biosynthesis pathways. Converts mainly nerolidol to dimethylnonatriene (DMNT) and, to a lower extent, geranyllinalool to trimethyltridecatetraene (TMTT). The polypeptide is Dimethylnonatriene synthase (Zea mays (Maize)).